Consider the following 264-residue polypeptide: Thymidylate synthase (264 aa).

R21 is a binding site for dUMP. Residue H51 participates in (6R)-5,10-methylene-5,6,7,8-tetrahydrofolate binding. A dUMP-binding site is contributed by 126–127 (RR). Residue C146 is the Nucleophile of the active site. Residues 166 to 169 (RSAD), N177, and 207 to 209 (HLY) contribute to the dUMP site. (6R)-5,10-methylene-5,6,7,8-tetrahydrofolate is bound at residue D169. A263 contacts (6R)-5,10-methylene-5,6,7,8-tetrahydrofolate.

This sequence belongs to the thymidylate synthase family. Bacterial-type ThyA subfamily. In terms of assembly, homodimer.

Its subcellular location is the cytoplasm. It carries out the reaction dUMP + (6R)-5,10-methylene-5,6,7,8-tetrahydrofolate = 7,8-dihydrofolate + dTMP. Its pathway is pyrimidine metabolism; dTTP biosynthesis. In terms of biological role, catalyzes the reductive methylation of 2'-deoxyuridine-5'-monophosphate (dUMP) to 2'-deoxythymidine-5'-monophosphate (dTMP) while utilizing 5,10-methylenetetrahydrofolate (mTHF) as the methyl donor and reductant in the reaction, yielding dihydrofolate (DHF) as a by-product. This enzymatic reaction provides an intracellular de novo source of dTMP, an essential precursor for DNA biosynthesis. The protein is Thymidylate synthase of Methylobacterium nodulans (strain LMG 21967 / CNCM I-2342 / ORS 2060).